The following is a 388-amino-acid chain: S-adenosylmethionine synthase (388 aa).

His17 is a binding site for ATP. Asp19 serves as a coordination point for Mg(2+). A K(+)-binding site is contributed by Glu45. Positions 58 and 101 each coordinate L-methionine. The segment at 101 to 111 (QSPDIGQGVDT) is flexible loop. ATP is bound by residues 160–162 (DGK), 226–227 (RF), Asp235, 241–242 (RK), Ala258, and Lys262. Residue Asp235 coordinates L-methionine. An L-methionine-binding site is contributed by Lys266.

It belongs to the AdoMet synthase family. Homotetramer; dimer of dimers. It depends on Mg(2+) as a cofactor. K(+) serves as cofactor.

Its subcellular location is the cytoplasm. The enzyme catalyses L-methionine + ATP + H2O = S-adenosyl-L-methionine + phosphate + diphosphate. The protein operates within amino-acid biosynthesis; S-adenosyl-L-methionine biosynthesis; S-adenosyl-L-methionine from L-methionine: step 1/1. Catalyzes the formation of S-adenosylmethionine (AdoMet) from methionine and ATP. The overall synthetic reaction is composed of two sequential steps, AdoMet formation and the subsequent tripolyphosphate hydrolysis which occurs prior to release of AdoMet from the enzyme. In Anaeromyxobacter sp. (strain K), this protein is S-adenosylmethionine synthase.